The following is a 444-amino-acid chain: Adenylosuccinate synthetase (444 aa).

GTP contacts are provided by residues 19-25 (GDEGKGK) and 47-49 (GHT). The Proton acceptor role is filled by Asp-20. Positions 20 and 47 each coordinate Mg(2+). Residues 20-23 (DEGK), 45-48 (NAGH), Thr-139, Arg-153, Gln-234, Thr-249, and Arg-317 contribute to the IMP site. His-48 functions as the Proton donor in the catalytic mechanism. 313–319 (TVTGRPR) contacts substrate. Residues Arg-319, 345-347 (KLD), and 427-429 (STG) contribute to the GTP site.

This sequence belongs to the adenylosuccinate synthetase family. As to quaternary structure, homodimer. Mg(2+) is required as a cofactor.

Its subcellular location is the cytoplasm. It catalyses the reaction IMP + L-aspartate + GTP = N(6)-(1,2-dicarboxyethyl)-AMP + GDP + phosphate + 2 H(+). Its pathway is purine metabolism; AMP biosynthesis via de novo pathway; AMP from IMP: step 1/2. Plays an important role in the de novo pathway of purine nucleotide biosynthesis. Catalyzes the first committed step in the biosynthesis of AMP from IMP. This Methylibium petroleiphilum (strain ATCC BAA-1232 / LMG 22953 / PM1) protein is Adenylosuccinate synthetase.